Here is a 175-residue protein sequence, read N- to C-terminus: Alpha-crystallin B chain (175 aa).

Position 1 is an N-acetylmethionine (Met-1). Position 19 is a phosphoserine (Ser-19). Ser-41 is a glycosylation site (O-linked (GlcNAc) serine). Residues Ser-45 and Ser-59 each carry the phosphoserine modification. The sHSP domain maps to 56–164 (RAPSWIDTGL…PERTIPITRE (109 aa)). Residue His-83 coordinates Zn(2+). N6-acetyllysine is present on Lys-92. Zn(2+)-binding residues include His-104, Glu-106, His-111, and His-119. The disordered stretch occupies residues 142–175 (VLTVNGPRRQASGPERTIPITREEKPAVTAAPKK). Residue Lys-166 is modified to N6-acetyllysine. O-linked (GlcNAc) threonine glycosylation occurs at Thr-170.

The protein belongs to the small heat shock protein (HSP20) family. In terms of assembly, heteromer composed of three CRYAA and one CRYAB subunits. Aggregates with homologous proteins, including the small heat shock protein HSPB1, to form large heteromeric complexes. Inter-subunit bridging via zinc ions enhances stability, which is crucial as there is no protein turn over in the lens. Interacts with HSPBAP1 and TTN/titin. Interacts with TMEM109; in the cellular response to DNA damage. Interacts with DES; binds rapidly during early stages of DES filament assembly and a reduced binding seen in the later stages. Interacts with TMED10; the interaction mediates the translocation from the cytoplasm into the ERGIC (endoplasmic reticulum-Golgi intermediate compartment) and thereby secretion. Interacts with ATP6V1A and with MTOR, forming a ternary complex.

Its subcellular location is the cytoplasm. It localises to the nucleus. The protein resides in the secreted. The protein localises to the lysosome. Functionally, may contribute to the transparency and refractive index of the lens. Has chaperone-like activity, preventing aggregation of various proteins under a wide range of stress conditions. In lens epithelial cells, stabilizes the ATP6V1A protein, preventing its degradation by the proteasome. The chain is Alpha-crystallin B chain (CRYAB) from Sus scrofa (Pig).